The sequence spans 188 residues: Dual specificity protein phosphatase 18 (188 aa).

One can recognise a Tyrosine-protein phosphatase domain in the interval Gly19–Gly160. The tract at residues Met95 to Ile141 is sufficient for mitochondrial localization. The active-site Phosphocysteine intermediate is Cys104.

It belongs to the protein-tyrosine phosphatase family. Non-receptor class dual specificity subfamily.

It is found in the cytoplasm. It localises to the nucleus. The protein resides in the mitochondrion inner membrane. It carries out the reaction O-phospho-L-tyrosyl-[protein] + H2O = L-tyrosyl-[protein] + phosphate. The enzyme catalyses O-phospho-L-seryl-[protein] + H2O = L-seryl-[protein] + phosphate. The catalysed reaction is O-phospho-L-threonyl-[protein] + H2O = L-threonyl-[protein] + phosphate. Its function is as follows. Can dephosphorylate single and diphosphorylated synthetic MAPK peptides, with preference for the phosphotyrosine and diphosphorylated forms over phosphothreonine. In vitro, dephosphorylates p-nitrophenyl phosphate (pNPP). In Bos taurus (Bovine), this protein is Dual specificity protein phosphatase 18 (DUSP18).